The sequence spans 147 residues: uncharacterized protein (147 aa).

The protein to M.jannaschii MJ0215.

This is an uncharacterized protein from Methanocaldococcus jannaschii (strain ATCC 43067 / DSM 2661 / JAL-1 / JCM 10045 / NBRC 100440) (Methanococcus jannaschii).